Consider the following 437-residue polypeptide: Phosphatidylserine decarboxylase proenzyme 1, mitochondrial (437 aa).

A mitochondrion-targeting transit peptide spans 1–18 (MLKFHRNVKPQFGAFARY). Residues 19 to 38 (SSLGKHNSRKRVGIIRLAYG) are Mitochondrial matrix-facing. A helical transmembrane segment spans residues 39-57 (LTGIGLVGLAGFAWAQDRH). Residues 58-437 (EKTYQKKGVQ…PLGRVVPSSH (380 aa)) are Mitochondrial intermembrane-facing. Active-site charge relay system; for autoendoproteolytic cleavage activity residues include aspartate 157, histidine 287, and serine 401. Serine 401 acts as the Schiff-base intermediate with substrate; via pyruvic acid; for decarboxylase activity in catalysis. Serine 401 carries the post-translational modification Pyruvic acid (Ser); by autocatalysis.

It belongs to the phosphatidylserine decarboxylase family. PSD-B subfamily. Eukaryotic type I sub-subfamily. As to quaternary structure, heterodimer of a large membrane-associated beta subunit and a small pyruvoyl-containing alpha subunit. Pyruvate serves as cofactor. In terms of processing, is synthesized initially as an inactive proenzyme. Formation of the active enzyme involves a self-maturation process in which the active site pyruvoyl group is generated from an internal serine residue via an autocatalytic post-translational modification. Two non-identical subunits are generated from the proenzyme in this reaction, and the pyruvate is formed at the N-terminus of the alpha chain, which is derived from the carboxyl end of the proenzyme. The autoendoproteolytic cleavage occurs by a canonical serine protease mechanism, in which the side chain hydroxyl group of the serine supplies its oxygen atom to form the C-terminus of the beta chain, while the remainder of the serine residue undergoes an oxidative deamination to produce ammonia and the pyruvoyl prosthetic group on the alpha chain. During this reaction, the Ser that is part of the protease active site of the proenzyme becomes the pyruvoyl prosthetic group, which constitutes an essential element of the active site of the mature decarboxylase.

It is found in the mitochondrion. The protein resides in the mitochondrion inner membrane. It catalyses the reaction a 1,2-diacyl-sn-glycero-3-phospho-L-serine + H(+) = a 1,2-diacyl-sn-glycero-3-phosphoethanolamine + CO2. It functions in the pathway phospholipid metabolism; phosphatidylethanolamine biosynthesis; phosphatidylethanolamine from CDP-diacylglycerol: step 2/2. Functionally, catalyzes the formation of phosphatidylethanolamine (PtdEtn) from phosphatidylserine (PtdSer). Plays a central role in phospholipid metabolism and in the interorganelle trafficking of phosphatidylserine. Together with psd2 and psd3, responsible for the majority of phosphatidylethanolamine synthesis. This chain is Phosphatidylserine decarboxylase proenzyme 1, mitochondrial, found in Schizosaccharomyces pombe (strain 972 / ATCC 24843) (Fission yeast).